The primary structure comprises 361 residues: DNA replication and repair protein RecF (361 aa).

Residue 30 to 37 (GQNAQGKT) coordinates ATP.

Belongs to the RecF family.

Its subcellular location is the cytoplasm. Functionally, the RecF protein is involved in DNA metabolism; it is required for DNA replication and normal SOS inducibility. RecF binds preferentially to single-stranded, linear DNA. It also seems to bind ATP. The protein is DNA replication and repair protein RecF of Streptococcus gordonii (strain Challis / ATCC 35105 / BCRC 15272 / CH1 / DL1 / V288).